Here is a 112-residue protein sequence, read N- to C-terminus: Mitochondrial import inner membrane translocase subunit TIM14-3 (112 aa).

A2 carries the post-translational modification N-acetylalanine. The helical transmembrane segment at 6–28 (IAGAAVAAAAVAGRYGILAWQAF) threads the bilayer. The J domain occupies 53–112 (EAALILGVRESVVADKVKEAHRRVMVANHPDAGGSHYLASKINEAKDMMLGKSNNSGSAF).

This sequence belongs to the TIM14 family. Probable component of the PAM complex at least composed of a mitochondrial HSP70 protein, TIMM44 and TIMM14. The complex interacts with the TIMM23 component of the TIM17:23 complex.

Its subcellular location is the mitochondrion. The protein resides in the mitochondrion inner membrane. In terms of biological role, component of the PAM complex, a complex required for the translocation of transit peptide-containing proteins from the inner membrane into the mitochondrial matrix in an ATP-dependent manner. The protein is Mitochondrial import inner membrane translocase subunit TIM14-3 (TIM14-3) of Arabidopsis thaliana (Mouse-ear cress).